The chain runs to 191 residues: UPF0312 protein PA0423 (191 aa).

A signal peptide spans 1–23 (MLKKTLAALALGSALFTAGQAMA).

It belongs to the UPF0312 family. Type 1 subfamily.

The protein resides in the periplasm. This Pseudomonas aeruginosa (strain ATCC 15692 / DSM 22644 / CIP 104116 / JCM 14847 / LMG 12228 / 1C / PRS 101 / PAO1) protein is UPF0312 protein PA0423.